Consider the following 72-residue polypeptide: Translation initiation factor IF-1 (72 aa).

Residues 1–72 (MTKEEVLEFP…TKGRITYRFK (72 aa)) form the S1-like domain.

The protein belongs to the IF-1 family. Component of the 30S ribosomal translation pre-initiation complex which assembles on the 30S ribosome in the order IF-2 and IF-3, IF-1 and N-formylmethionyl-tRNA(fMet); mRNA recruitment can occur at any time during PIC assembly.

Its subcellular location is the cytoplasm. Functionally, one of the essential components for the initiation of protein synthesis. Stabilizes the binding of IF-2 and IF-3 on the 30S subunit to which N-formylmethionyl-tRNA(fMet) subsequently binds. Helps modulate mRNA selection, yielding the 30S pre-initiation complex (PIC). Upon addition of the 50S ribosomal subunit IF-1, IF-2 and IF-3 are released leaving the mature 70S translation initiation complex. This chain is Translation initiation factor IF-1, found in Agrobacterium fabrum (strain C58 / ATCC 33970) (Agrobacterium tumefaciens (strain C58)).